The primary structure comprises 1502 residues: MLEINDFSAIRISLASPEDILSWSHGEVTKPETINYRTLKPERDGLFCERIFGPTKDWECYCGKYKRVRYKGVVCDKCGVEVTRSKVRRERMGHISLASPVSHIWFVKGTPSRLGLLLDISPRNLERVLYFASYIIVHVDEEVKAHRREALQAEYREKRERIQAEAESRQIELSTQLTQDLGGMESAQLSTQRRIEEEYRRLRDEISAEAERLRTDLEEKQGEAAEEDIIFRGTVLVEEGESITEKTLDALDELLDQELETLEQRKQRDLEDAEQLTGAERERKEYEASQERERLQERLQSELDRLVREEKERLEQLDSIKLKRILNEQEYRALREIAPGAFRADMGAGAIRDLIVRTVDLDKLAEELQNEVYTTQGQRRKKATKRLRVVEAFRKSGNRPEWMILTVLPVIPPDLRPMVQLDGGRFATSDLNDLYRRVINRNNRLKRLMELNAPEIIVRNEKRMLQEAVDALIDNGRRGRAVSGKGKHRLKSLSDMLKGKQGRFRQNLLGKRVDYSGRSVIVVGPDLKLHQCGLPKKMALELFKPFVMRRLVEKGAAHNIKSAKRIVERVRPEVWDVLEEVIKDYLVLLNRAPSLHRLSIQAFEAKLIEGSAIQLHPLVCAAFNADFDGDQMAVHVPLSRKAQEEARMRMLSKYNLLSPATGDPIITPSQDIVLGCYYLTMVRDGAKGSGKMFASIDEALLAYDKGLVDIQAPIFVRMTGTLHGESDRPVRILNSDENGAPRMLLETTIGRIIFNNELLEPLRFRNRLIAKKGLREIIADCYKYYTNLNNLTEADLDTIRTMYGDRPRDDLARYFGSEMTASQADRIKTLGFKYATRGGMTIGVDDIEIPPKKQEILAEAEKRVAEVERQFRRGLITEEERYREIVEIWQNATKQTTEAVKQYLNPFGPVAMMVNSAARGNINQLSQMAGMRGLMSDPTGRIIELPIKSNFREGLSVLEYFVSTHGGRKGLADTALRTADAGYLTRRLIDVAQDNIVTIDDCGTDEGLWIYRSDDREVLQDFEQRILGRLLAAPLVDPRTGEVLADRNAEIDEALTRRCKELGIDAVYVRSPLACKADYGICRMCYGRNLATGKLVDIGEAVGIIAAQSIGEPGTQLTLRTFHTGGVASADDITQGLPRVQEIFEARTPKGKAILAEIDGIVELVREDEVRKIRVVSTDLYTDDHVLPPHYEPVVADGAQVNEGDVLAQSNRADLDSEPIVARLAGVVRIGAGQISVINEEREVREVIAPHTARLAAGIENGARVVAGQHLTEGSADPQELLALQGREAVQRYLVNEAQKVYRSQGVDINDKHIEVIVRQMLRRVRIEEPGDTDYLPGELIDSTEFVRRNAEIISQGGEPATASTMLLGITKASLTTDSFLAAASFQETTRVLTEAAITGKVDYLRGLKENVVIGKLIPAGTGIEKRRQLAEEVIGELANVVPTSTAVVEQERPEREADEALRRRLRALIGSDDNGDEVGKNGEFADETPFTGDSDDRDNEI.

Cysteine 60, cysteine 62, cysteine 75, and cysteine 78 together coordinate Zn(2+). Residues 265-293 (RKQRDLEDAEQLTGAERERKEYEASQERE) form a disordered region. Basic and acidic residues predominate over residues 279-293 (AERERKEYEASQERE). Residues aspartate 626, aspartate 628, and aspartate 630 each coordinate Mg(2+). Zn(2+) contacts are provided by cysteine 1002, cysteine 1075, cysteine 1082, and cysteine 1085. The tract at residues 1472–1502 (SDDNGDEVGKNGEFADETPFTGDSDDRDNEI) is disordered.

It belongs to the RNA polymerase beta' chain family. As to quaternary structure, the RNAP catalytic core consists of 2 alpha, 1 beta, 1 beta' and 1 omega subunit. When a sigma factor is associated with the core the holoenzyme is formed, which can initiate transcription. Mg(2+) is required as a cofactor. The cofactor is Zn(2+).

It carries out the reaction RNA(n) + a ribonucleoside 5'-triphosphate = RNA(n+1) + diphosphate. DNA-dependent RNA polymerase catalyzes the transcription of DNA into RNA using the four ribonucleoside triphosphates as substrates. This Roseiflexus castenholzii (strain DSM 13941 / HLO8) protein is DNA-directed RNA polymerase subunit beta'.